The following is a 336-amino-acid chain: Ketoreductase adrE (336 aa).

Tyrosine 171 provides a ligand contact to NADP(+).

The protein belongs to the NAD(P)-dependent epimerase/dehydratase family. Dihydroflavonol-4-reductase subfamily.

It participates in secondary metabolite biosynthesis; terpenoid biosynthesis. Ketoreductase; part of the gene cluster that mediates the biosynthesis of andrastins, meroterpenoid compounds that exhibit inhibitory activity against ras farnesyltransferase, suggesting that they could be promising leads for antitumor agents. The first step of the pathway is the synthesis of 3,5-dimethylorsellinic acid (DMOA) by the polyketide synthase adrD via condensation of one acetyl-CoA starter unit with 3 malonyl-CoA units and 2 methylations. DMAO is then converted to farnesyl-DMAO by the prenyltransferase adrG. The methyltransferase adrK catalyzes the methylation of the carboxyl group of farnesyl-DMAO to farnesyl-DMAO methyl ester which is further converted to epoxyfarnesyl-DMAO methyl ester by the FAD-dependent monooxygenase adrH. The terpene cyclase adrI then catalyzes the carbon skeletal rearrangement to generate the andrastin E, the first compound in the pathway having the andrastin scaffold, with the tetracyclic ring system. The post-cyclization tailoring enzymes adrF, adrE, adrJ, and adrA, are involved in the conversion of andrastin E into andrastin A. The short chain dehydrogenase adrF is responsible for the oxidation of the C-3 a hydroxyl group of andrastin E to yield the corresponding ketone, andrastin D. The ketoreductase adrE stereoselectively reduces the carbonyl moiety to reverse the stereochemistry of the C-3 position to yield andrastin F. The acetyltransferase adrJ is the acetyltransferase that attaches the acetyl group to the C-3 hydroxyl group of andrastin F to yield andrastin C. Finally, the cytochrome P450 monooxygenase adrA catalyzes two sequential oxidation reactions of the C-23 methyl group, to generate the corresponding alcohol andrastin B, and aldehyde andrastin A. The sequence is that of Ketoreductase adrE from Penicillium rubens (strain ATCC 28089 / DSM 1075 / NRRL 1951 / Wisconsin 54-1255) (Penicillium chrysogenum).